We begin with the raw amino-acid sequence, 76 residues long: ATP synthase subunit 9, mitochondrial (76 aa).

The next 2 membrane-spanning stretches (helical) occupy residues 14 to 34 (IATLGLGGAAIGIALVFVALI) and 52 to 72 (ILGFALSEACGLFCLMISFLL).

The protein belongs to the ATPase C chain family. In terms of assembly, F-type ATPases have 2 components, CF(1) - the catalytic core - and CF(0) - the membrane proton channel. CF(1) has five subunits: alpha(3), beta(3), gamma(1), delta(1), epsilon(1). CF(0) has three main subunits: a, b and c.

It is found in the mitochondrion membrane. In terms of biological role, mitochondrial membrane ATP synthase (F(1)F(0) ATP synthase or Complex V) produces ATP from ADP in the presence of a proton gradient across the membrane which is generated by electron transport complexes of the respiratory chain. F-type ATPases consist of two structural domains, F(1) - containing the extramembraneous catalytic core and F(0) - containing the membrane proton channel, linked together by a central stalk and a peripheral stalk. During catalysis, ATP synthesis in the catalytic domain of F(1) is coupled via a rotary mechanism of the central stalk subunits to proton translocation. Part of the complex F(0) domain. A homomeric c-ring of probably 10 subunits is part of the complex rotary element. The sequence is that of ATP synthase subunit 9, mitochondrial (ATP9) from Candida albicans (strain SC5314 / ATCC MYA-2876) (Yeast).